The sequence spans 49 residues: Light-harvesting protein B-880 alpha chain (49 aa).

At 1 to 12 (MYKLWLLFDPRR) the chain is on the cytoplasmic side. Residues 13–33 (TLVALSAFLFVLGLIIHFISL) traverse the membrane as a helical segment. Residue His-29 participates in a bacteriochlorophyll binding. At 34–49 (STDRFNWLEGKPAVRA) the chain is on the periplasmic side.

Belongs to the antenna complex alpha subunit family. As to quaternary structure, the core complex is formed by different alpha and beta chains, binding bacteriochlorophyll molecules, and arranged most probably in tetrameric structures disposed around the reaction center. The non-pigmented gamma chains may constitute additional components.

Its subcellular location is the cell inner membrane. Functionally, antenna complexes are light-harvesting systems, which transfer the excitation energy to the reaction centers. In Rhodoblastus acidophilus (Rhodopseudomonas acidophila), this protein is Light-harvesting protein B-880 alpha chain.